The following is a 370-amino-acid chain: Peptide chain release factor 1 (370 aa).

The residue at position 239 (glutamine 239) is an N5-methylglutamine.

This sequence belongs to the prokaryotic/mitochondrial release factor family. Post-translationally, methylated by PrmC. Methylation increases the termination efficiency of RF1.

The protein localises to the cytoplasm. Functionally, peptide chain release factor 1 directs the termination of translation in response to the peptide chain termination codons UAG and UAA. In Bacteroides fragilis (strain ATCC 25285 / DSM 2151 / CCUG 4856 / JCM 11019 / LMG 10263 / NCTC 9343 / Onslow / VPI 2553 / EN-2), this protein is Peptide chain release factor 1.